A 178-amino-acid polypeptide reads, in one-letter code: Large ribosomal subunit protein uL6 (178 aa).

It belongs to the universal ribosomal protein uL6 family. In terms of assembly, part of the 50S ribosomal subunit.

This protein binds to the 23S rRNA, and is important in its secondary structure. It is located near the subunit interface in the base of the L7/L12 stalk, and near the tRNA binding site of the peptidyltransferase center. This is Large ribosomal subunit protein uL6 from Streptococcus pyogenes serotype M3 (strain ATCC BAA-595 / MGAS315).